Here is a 259-residue protein sequence, read N- to C-terminus: Small ribosomal subunit protein uS2 (259 aa).

This sequence belongs to the universal ribosomal protein uS2 family.

The protein is Small ribosomal subunit protein uS2 of Streptococcus pneumoniae serotype 4 (strain ATCC BAA-334 / TIGR4).